A 366-amino-acid chain; its full sequence is 5-formaminoimidazole-4-carboxamide-1-(beta)-D-ribofuranosyl 5'-monophosphate synthetase (366 aa).

The 5-amino-1-(5-phospho-beta-D-ribosyl)imidazole-4-carboxamide site is built by His-27 and Ser-96. Residues 131–357 (RKWLEDAGVP…IAREIKEAVK (227 aa)) form the ATP-grasp domain. ATP-binding positions include 154 to 208 (PVIV…VRFY) and Glu-239. Asn-263 contributes to the 5-amino-1-(5-phospho-beta-D-ribosyl)imidazole-4-carboxamide binding site. 2 residues coordinate Mg(2+): Glu-302 and Glu-315.

This sequence belongs to the phosphohexose mutase family. It depends on Mg(2+) as a cofactor. Mn(2+) is required as a cofactor.

It carries out the reaction 5-amino-1-(5-phospho-beta-D-ribosyl)imidazole-4-carboxamide + formate + ATP = 5-formamido-1-(5-phospho-D-ribosyl)imidazole-4-carboxamide + ADP + phosphate. The protein operates within purine metabolism; IMP biosynthesis via de novo pathway; 5-formamido-1-(5-phospho-D-ribosyl)imidazole-4-carboxamide from 5-amino-1-(5-phospho-D-ribosyl)imidazole-4-carboxamide (formate route): step 1/1. Functionally, catalyzes the ATP- and formate-dependent formylation of 5-aminoimidazole-4-carboxamide-1-beta-d-ribofuranosyl 5'-monophosphate (AICAR) to 5-formaminoimidazole-4-carboxamide-1-beta-d-ribofuranosyl 5'-monophosphate (FAICAR) in the absence of folates. This Korarchaeum cryptofilum (strain OPF8) protein is 5-formaminoimidazole-4-carboxamide-1-(beta)-D-ribofuranosyl 5'-monophosphate synthetase.